The sequence spans 88 residues: Small ribosomal subunit protein bS20 (88 aa).

The protein belongs to the bacterial ribosomal protein bS20 family.

Binds directly to 16S ribosomal RNA. This chain is Small ribosomal subunit protein bS20, found in Natranaerobius thermophilus (strain ATCC BAA-1301 / DSM 18059 / JW/NM-WN-LF).